Consider the following 943-residue polypeptide: WD repeat-containing protein 3 (943 aa).

5 WD repeats span residues 21–60, 63–102, 105–144, 147–186, and 189–228; these read SQKG…KILI, GLKQ…GNVT, GHKA…GLYR, GHKD…CFKT, and GHRT…EIED. Phosphoserine occurs at positions 240 and 241. Threonine 257 bears the Phosphothreonine mark. One copy of the WD 6 repeat lies at 277-316; sequence EGRDRVVNLAVDKTGRILACHGTDSVLELFCILSKKEIQK. The interval 326-345 is disordered; sequence RKKAKLHSSKGEEEDPEVNV. WD repeat units lie at residues 413 to 451, 453 to 493, 494 to 533, 547 to 586, 589 to 630, 631 to 670, and 673 to 712; these read GHRS…CIRT, TCEY…ETID, AHDG…DENS, QLDE…FFLS, GHKL…KSLF, AHDD…HIQT, and GHHQ…LILE. Glycyl lysine isopeptide (Lys-Gly) (interchain with G-Cter in SUMO2) cross-links involve residues lysine 474 and lysine 529. Position 726 is a phosphoserine (serine 726).

It belongs to the WD repeat WDR3/UTP12 family. Part of the small subunit (SSU) processome, composed of more than 70 proteins and the RNA chaperone small nucleolar RNA (snoRNA) U3. Ubiquitous.

It localises to the nucleus. The protein localises to the nucleolus. Its function is as follows. Part of the small subunit (SSU) processome, first precursor of the small eukaryotic ribosomal subunit. During the assembly of the SSU processome in the nucleolus, many ribosome biogenesis factors, an RNA chaperone and ribosomal proteins associate with the nascent pre-rRNA and work in concert to generate RNA folding, modifications, rearrangements and cleavage as well as targeted degradation of pre-ribosomal RNA by the RNA exosome. This Homo sapiens (Human) protein is WD repeat-containing protein 3.